A 261-amino-acid chain; its full sequence is MAATAREDGASGQERGQRGCEHYDRGCLLKAPCCDKLYTCRLCHDNNEDHQLDRFKVKEVQCINCEKIQHAQQTCEECSTLFGEYYCDICHLFDKDKKQYHCENCGICRIGPKEDFFHCLKCNLCLAMNLQGRHKCIENVSRQNCPICLEDIHTSRVVAHVLPCGHLLHRTCYEEMLKEGYRCPLCMHSALDMTRYWRQLDDEVAQTPMPSEYQNMTVDILCNDCNGRSTVQFHILGMKCKICESYNTAQAGGRRISLDQQ.

The CHY-type zinc-finger motif lies at 13–80 (QERGQRGCEH…AQQTCEECST (68 aa)). Positions 20, 22, 33, 34, 40, 43, 44, 50, 62, 65, 75, 78, 87, 90, 101, 102, 105, 108, 118, 119, 122, 125, 134, and 136 each coordinate Zn(2+). The CTCHY-type zinc finger occupies 82-144 (FGEYYCDICH…KCIENVSRQN (63 aa)). An RING-type zinc finger spans residues 145–189 (CPICLEDIHTSRVVAHVLPCGHLLHRTCYEEMLKEGYRCPLCMHS). Serine 257 is modified (phosphoserine).

As to quaternary structure, monomer and homodimer. Interacts with AR, MDM2, KAT5, PLAG1, PLAGL2, COPE, UBE2D2 and GORAB/NTKLBP1. Post-translationally, subject to ubiquitination and proteasomal degradation. Interaction with PLAGL2 or KAT5 enhances protein stability.

It is found in the nucleus. The protein localises to the nucleus speckle. Its subcellular location is the cytoplasm. It carries out the reaction S-ubiquitinyl-[E2 ubiquitin-conjugating enzyme]-L-cysteine + [acceptor protein]-L-lysine = [E2 ubiquitin-conjugating enzyme]-L-cysteine + N(6)-ubiquitinyl-[acceptor protein]-L-lysine.. It participates in protein modification; protein ubiquitination. E3 ubiquitin-protein ligase that mediates ubiquitination of target proteins, including p53/TP53, TP73, HDAC1 and CDKN1B. Mediates ubiquitination and degradation of p53/TP53; preferentially acts on tetrameric p53/TP53. Catalyzes monoubiquitinates the translesion DNA polymerase POLH. Involved in the ribosome-associated quality control (RQC) pathway, which mediates the extraction of incompletely synthesized nascent chains from stalled ribosomes: RCHY1 acts downstream of NEMF and recognizes CAT tails associated with stalled nascent chains, leading to their ubiquitination and degradation. Functionally, has no E3 ubiquitin-protein ligase activity. The protein is RING finger and CHY zinc finger domain-containing protein 1 (RCHY1) of Homo sapiens (Human).